We begin with the raw amino-acid sequence, 618 residues long: Protein fem-1 homolog C (618 aa).

ANK repeat units lie at residues 2–31 (DLKT…DREV), 40–70 (NGAT…PVEL), 82–111 (EGAP…SVNN), 115–144 (TNST…DLEV), 148–177 (HGHT…DVNR), 181–210 (KGNT…SMEK), and 213–243 (YGMT…GLAE). TPR repeat units follow at residues 245-279 (ISAL…RHSE) and 337-370 (SYYI…QQSN). ANK repeat units lie at residues 482–524 (NGFS…DVNS) and 528–557 (DDNS…HFDS).

The protein belongs to the fem-1 family. Component of a CRL2 E3 ubiquitin-protein ligase complex, also named ECS (Elongin BC-CUL2/5-SOCS-box protein) complex.

The protein operates within protein modification; protein ubiquitination. Substrate-recognition component of a Cul2-RING (CRL2) E3 ubiquitin-protein ligase complex of the DesCEND (destruction via C-end degrons) pathway, which recognizes a C-degron located at the extreme C terminus of target proteins, leading to their ubiquitination and degradation. The C-degron recognized by the DesCEND pathway is usually a motif of less than ten residues and can be present in full-length proteins, truncated proteins or proteolytically cleaved forms. The CRL2(FEM1C) complex specifically recognizes proteins with an arginine at the C-terminus: recognizes and binds proteins ending with -Lys/Arg-Xaa-Arg and -Lys/Arg-Xaa-Xaa-Arg C-degrons, leading to their ubiquitination and degradation. This chain is Protein fem-1 homolog C, found in Danio rerio (Zebrafish).